Reading from the N-terminus, the 81-residue chain is MAITKKMLVVFLLAFLFVTSSVHCSDSTLGIGINQDWKKCFSPDPCKKAGTQGCMEFCRTISFLLFGECTSKPDQCCCVTK.

The signal sequence occupies residues 1 to 24 (MAITKKMLVVFLLAFLFVTSSVHC). Cystine bridges form between cysteine 40–cysteine 78, cysteine 46–cysteine 69, cysteine 54–cysteine 76, and cysteine 58–cysteine 77.

It belongs to the DEFL family.

It is found in the secreted. The protein is Defensin-like protein 115 of Arabidopsis thaliana (Mouse-ear cress).